The following is a 258-amino-acid chain: Ribosomal RNA small subunit methyltransferase A (258 aa).

Residues Asn12, Leu14, Gly38, Glu59, Asp83, and Asn100 each contribute to the S-adenosyl-L-methionine site.

This sequence belongs to the class I-like SAM-binding methyltransferase superfamily. rRNA adenine N(6)-methyltransferase family. RsmA subfamily.

The protein resides in the cytoplasm. The catalysed reaction is adenosine(1518)/adenosine(1519) in 16S rRNA + 4 S-adenosyl-L-methionine = N(6)-dimethyladenosine(1518)/N(6)-dimethyladenosine(1519) in 16S rRNA + 4 S-adenosyl-L-homocysteine + 4 H(+). Specifically dimethylates two adjacent adenosines (A1518 and A1519) in the loop of a conserved hairpin near the 3'-end of 16S rRNA in the 30S particle. May play a critical role in biogenesis of 30S subunits. The protein is Ribosomal RNA small subunit methyltransferase A of Metamycoplasma arthritidis (strain 158L3-1) (Mycoplasma arthritidis).